The primary structure comprises 555 residues: Membrane protein insertase YidC (555 aa).

Residues 7–24 (ILWVIFSMSLVLLYDNWQ) form a helical membrane-spanning segment. Low complexity-rich tracts occupy residues 40–54 (QQAA…TPQA) and 64–81 (AAPG…QPVG). The segment at 40–81 (QQAAPAGAGGATPQADVPKANATNAAPGTVPAAPQAAAQPVG) is disordered. 5 helical membrane-spanning segments follow: residues 334–354 (LELV…FWLL), 360–380 (FLGN…LVFF), 430–450 (LGGC…YWVL), 468–488 (LSVP…MFVQ), and 503–523 (VMMI…AGLV).

This sequence belongs to the OXA1/ALB3/YidC family. Type 1 subfamily. In terms of assembly, interacts with the Sec translocase complex via SecD. Specifically interacts with transmembrane segments of nascent integral membrane proteins during membrane integration.

Its subcellular location is the cell inner membrane. Required for the insertion and/or proper folding and/or complex formation of integral membrane proteins into the membrane. Involved in integration of membrane proteins that insert both dependently and independently of the Sec translocase complex, as well as at least some lipoproteins. Aids folding of multispanning membrane proteins. In Cupriavidus metallidurans (strain ATCC 43123 / DSM 2839 / NBRC 102507 / CH34) (Ralstonia metallidurans), this protein is Membrane protein insertase YidC.